The following is a 191-amino-acid chain: Fe/S biogenesis protein NfuA (191 aa).

Cys-149 and Cys-152 together coordinate [4Fe-4S] cluster.

The protein belongs to the NfuA family. Homodimer. [4Fe-4S] cluster is required as a cofactor.

Involved in iron-sulfur cluster biogenesis. Binds a 4Fe-4S cluster, can transfer this cluster to apoproteins, and thereby intervenes in the maturation of Fe/S proteins. Could also act as a scaffold/chaperone for damaged Fe/S proteins. The protein is Fe/S biogenesis protein NfuA of Yersinia enterocolitica serotype O:8 / biotype 1B (strain NCTC 13174 / 8081).